Reading from the N-terminus, the 79-residue chain is Putative membrane protein insertion efficiency factor (79 aa).

It belongs to the UPF0161 family.

Its subcellular location is the cell inner membrane. In terms of biological role, could be involved in insertion of integral membrane proteins into the membrane. This chain is Putative membrane protein insertion efficiency factor, found in Prochlorococcus marinus (strain NATL1A).